A 256-amino-acid polypeptide reads, in one-letter code: ATP synthase subunit a (256 aa).

Residues 1 to 7 (MLNLFIT) constitute a propeptide, removed in mature form. Helical transmembrane passes span 33–53 (FTTF…LNLL), 92–112 (YFPL…ISMI), 122–142 (LIFI…IGLT), 148–168 (FFSL…LVLI), 188–208 (VLSG…LMSM), and 209–229 (SIIT…IVVL).

This sequence belongs to the ATPase A chain family. As to quaternary structure, F-type ATPases have 2 components, CF(1) - the catalytic core - and CF(0) - the membrane proton channel. CF(1) has five subunits: alpha(3), beta(3), gamma(1), delta(1), epsilon(1). CF(0) has three main subunits: a, b and c.

It is found in the mitochondrion inner membrane. Functionally, mitochondrial membrane ATP synthase (F(1)F(0) ATP synthase or Complex V) produces ATP from ADP in the presence of a proton gradient across the membrane which is generated by electron transport complexes of the respiratory chain. F-type ATPases consist of two structural domains, F(1) - containing the extramembraneous catalytic core and F(0) - containing the membrane proton channel, linked together by a central stalk and a peripheral stalk. During catalysis, ATP synthesis in the catalytic domain of F(1) is coupled via a rotary mechanism of the central stalk subunits to proton translocation. Key component of the proton channel; it may play a direct role in the translocation of protons across the membrane. In Kluyveromyces lactis (strain ATCC 8585 / CBS 2359 / DSM 70799 / NBRC 1267 / NRRL Y-1140 / WM37) (Yeast), this protein is ATP synthase subunit a (ATP6).